A 229-amino-acid chain; its full sequence is Imidazoleglycerol-phosphate dehydratase (229 aa).

Belongs to the imidazoleglycerol-phosphate dehydratase family.

The enzyme catalyses D-erythro-1-(imidazol-4-yl)glycerol 3-phosphate = 3-(imidazol-4-yl)-2-oxopropyl phosphate + H2O. It participates in amino-acid biosynthesis; L-histidine biosynthesis; L-histidine from 5-phospho-alpha-D-ribose 1-diphosphate: step 6/9. In Neurospora crassa (strain ATCC 24698 / 74-OR23-1A / CBS 708.71 / DSM 1257 / FGSC 987), this protein is Imidazoleglycerol-phosphate dehydratase.